Here is a 304-residue protein sequence, read N- to C-terminus: Probable cobalamin biosynthesis protein CobD (304 aa).

5 helical membrane passes run 2–22, 50–70, 73–93, 147–167, and 284–304; these read IVVL…KEYI, ILFS…AVYL, FILV…FSIT, VDGY…GAFI, and AAYS…AVFL.

This sequence belongs to the CobD/CbiB family.

The protein localises to the cell membrane. It participates in cofactor biosynthesis; adenosylcobalamin biosynthesis. Its function is as follows. Converts cobyric acid to cobinamide by the addition of aminopropanol on the F carboxylic group. This chain is Probable cobalamin biosynthesis protein CobD, found in Thermoplasma volcanium (strain ATCC 51530 / DSM 4299 / JCM 9571 / NBRC 15438 / GSS1).